The primary structure comprises 501 residues: MNYHSFLPLRRSSLSHSTTPPSKSRNQTRYIWSIALQNTMAVEDFEAVLKAKYPGKAHAKRVVDLIRKTKPDANGVIYLEGRMTKLLEDNDSPEPFRQRRFFYYLTGCNLADCALAYDIQSSKSILFIPPIDPDDVIWSGLPLSIDEALSRYDVDEVKFTTEVNPTLTHLAKQSPNSTVFAIANQVSDNVTFIEFGSKDFETVKKAIEVSRVVKDEFEVAMIRKANHISSLAHKAVIERSKTAATEQELYATFLERCVSHAAPEMAYHPILAAGKAAATLHYVDNNAPLKGKQNLLIDAGCEWNNYASDITRTFPLTGKFTKESRDIYDIVLRMQKECTELIKGGMIWDDLHLHAHKVAIDGLLALGILKGDAKEILDARTSAAFFPHGLGHHLGMDTHDTGGNPNPNDPDKLFRYLRLRGHVPAGAVVTVEPGIYFCDFIIKPYLDDHVHSKYIDAAVLNKYWDVGGVRIEDNIHVTENGYVNLTTAIKEVSDVEAVSAK.

Positions 1 to 25 are disordered; sequence MNYHSFLPLRRSSLSHSTTPPSKSR. The segment covering 12–25 has biased composition (polar residues); that stretch reads SSLSHSTTPPSKSR. The Mn(2+) site is built by Asp-298, Asp-309, Glu-432, and Glu-472.

The protein belongs to the peptidase M24B family. Mn(2+) serves as cofactor.

The catalysed reaction is Release of any N-terminal amino acid, including proline, that is linked to proline, even from a dipeptide or tripeptide.. Catalyzes the removal of a penultimate prolyl residue from the N-termini of peptides. This is Probable Xaa-Pro aminopeptidase pepP (pepP) from Metarhizium acridum (strain CQMa 102).